The following is a 592-amino-acid chain: V-type ATP synthase alpha chain 2 (592 aa).

237–244 (GGFGTGKT) provides a ligand contact to ATP.

Belongs to the ATPase alpha/beta chains family.

It carries out the reaction ATP + H2O + 4 H(+)(in) = ADP + phosphate + 5 H(+)(out). Produces ATP from ADP in the presence of a proton gradient across the membrane. The V-type alpha chain is a catalytic subunit. The protein is V-type ATP synthase alpha chain 2 of Clostridium tetani (strain Massachusetts / E88).